The following is a 567-amino-acid chain: Oxygen-dependent choline dehydrogenase (567 aa).

Residue 6 to 35 (DYIIVGAGSAGNTLATRLTEDEGVTVLLLE) participates in FAD binding. The disordered stretch occupies residues 182 to 203 (QQEGFGPMDRTVTPKGRRASTA). H475 (proton acceptor) is an active-site residue.

It belongs to the GMC oxidoreductase family. Requires FAD as cofactor.

It carries out the reaction choline + A = betaine aldehyde + AH2. The catalysed reaction is betaine aldehyde + NAD(+) + H2O = glycine betaine + NADH + 2 H(+). The protein operates within amine and polyamine biosynthesis; betaine biosynthesis via choline pathway; betaine aldehyde from choline (cytochrome c reductase route): step 1/1. In terms of biological role, involved in the biosynthesis of the osmoprotectant glycine betaine. Catalyzes the oxidation of choline to betaine aldehyde and betaine aldehyde to glycine betaine at the same rate. The polypeptide is Oxygen-dependent choline dehydrogenase (Pseudomonas fluorescens (strain ATCC BAA-477 / NRRL B-23932 / Pf-5)).